Here is a 500-residue protein sequence, read N- to C-terminus: NAD(P)H-quinone oxidoreductase chain 4, chloroplastic (500 aa).

Helical transmembrane passes span 4 to 24 (FPWL…IFFF), 37 to 57 (ICIC…HFQL), 84 to 104 (GLSI…TLAA), 111 to 129 (SRLF…IGSF), 134 to 154 (LLLF…LLSM), 167 to 187 (FILY…GMGL), 208 to 228 (ALEI…SPII), 242 to 262 (HYST…YGLV), 272 to 292 (AHSI…IYAA), 305 to 325 (IAYS…SITD), 330 to 350 (GAIL…FLAG), 374 to 396 (IFTM…GFVA), 416 to 436 (ILIT…SLSM), and 462 to 482 (LFVS…PDFV).

Belongs to the complex I subunit 4 family.

The protein localises to the plastid. Its subcellular location is the chloroplast thylakoid membrane. The enzyme catalyses a plastoquinone + NADH + (n+1) H(+)(in) = a plastoquinol + NAD(+) + n H(+)(out). It catalyses the reaction a plastoquinone + NADPH + (n+1) H(+)(in) = a plastoquinol + NADP(+) + n H(+)(out). In Liriodendron tulipifera (Tuliptree), this protein is NAD(P)H-quinone oxidoreductase chain 4, chloroplastic.